Reading from the N-terminus, the 82-residue chain is ATP synthase subunit c, chloroplastic (82 aa).

The next 2 helical transmembrane spans lie at P3–G23 and L57–A77.

It belongs to the ATPase C chain family. As to quaternary structure, F-type ATPases have 2 components, F(1) - the catalytic core - and F(0) - the membrane proton channel. F(1) has five subunits: alpha(3), beta(3), gamma(1), delta(1), epsilon(1). F(0) has four main subunits: a(1), b(1), b'(1) and c(10-14). The alpha and beta chains form an alternating ring which encloses part of the gamma chain. F(1) is attached to F(0) by a central stalk formed by the gamma and epsilon chains, while a peripheral stalk is formed by the delta, b and b' chains.

It is found in the plastid. The protein localises to the chloroplast thylakoid membrane. In terms of biological role, f(1)F(0) ATP synthase produces ATP from ADP in the presence of a proton or sodium gradient. F-type ATPases consist of two structural domains, F(1) containing the extramembraneous catalytic core and F(0) containing the membrane proton channel, linked together by a central stalk and a peripheral stalk. During catalysis, ATP synthesis in the catalytic domain of F(1) is coupled via a rotary mechanism of the central stalk subunits to proton translocation. Its function is as follows. Key component of the F(0) channel; it plays a direct role in translocation across the membrane. A homomeric c-ring of between 10-14 subunits forms the central stalk rotor element with the F(1) delta and epsilon subunits. In Cyanidium caldarium (Red alga), this protein is ATP synthase subunit c, chloroplastic.